A 540-amino-acid chain; its full sequence is MTLKSLPAWTALQSHFEQIRHARLRDWFAPENDRAPTRAERFTIPGGGLAADFSKNRIDDETVRLLVQLARDAGVEARRDAMFAGEIVNPTEGRAALHTALRATDPQAPFHAQVSAERAKMATFARAVRSGTWTGYTGKRIRHVINIGIGGSDLGPKMVVHALHHVATPEISTHFVSNVDGADLARVLEQVDPEETLAIIVSKTFTTLETMTNARSLRDWFVARGCPEDALAKHFVGVSANPAEVVKFGIAADNVFEMWDWVGGRYSLWSAVGLSIMIAVGPEQFDELLAGANDMDRHFREAPLERNLPVLLGLIGIWYRNFFGSQSYLVAPYSEALHYLPSYLQQLEMESNGKSARLDGTFVDYPTSAVTWGEPGTNGQHAFFQMLHQGPTIVPIDFIAVLTPEHPLASHHPKLLANCFAQSEALMLGRTLEEARKVAGPGKEALAPHLTFPGNRPTTTLLVDALTPRALGALIALYEHKVLVQATVWDINPFDQWGVELGKILGKVVEADLSAESVDPAKHDSSTTALIERARAALKR.

Glu350 serves as the catalytic Proton donor. Residues His381 and Lys503 contribute to the active site.

This sequence belongs to the GPI family.

The protein localises to the cytoplasm. The catalysed reaction is alpha-D-glucose 6-phosphate = beta-D-fructose 6-phosphate. It participates in carbohydrate biosynthesis; gluconeogenesis. It functions in the pathway carbohydrate degradation; glycolysis; D-glyceraldehyde 3-phosphate and glycerone phosphate from D-glucose: step 2/4. Catalyzes the reversible isomerization of glucose-6-phosphate to fructose-6-phosphate. The protein is Glucose-6-phosphate isomerase of Burkholderia cenocepacia (strain ATCC BAA-245 / DSM 16553 / LMG 16656 / NCTC 13227 / J2315 / CF5610) (Burkholderia cepacia (strain J2315)).